The chain runs to 168 residues: N-alpha-acetyltransferase 50 (168 aa).

Residues 5 to 154 enclose the N-acetyltransferase domain; sequence IELGDVTPHN…DAHVLQKSLR (150 aa). Tyrosine 30 is a binding site for substrate. Tyrosine 72 is a catalytic residue. Residue methionine 74 participates in substrate binding. 76-89 is an acetyl-CoA binding site; sequence LGCLAPYRRLGIGT. Histidine 111 is an active-site residue. 116–125 is a binding site for CoA; that stretch reads NESAIDFYQK. The tract at residues 137–140 is substrate; that stretch reads YYKR.

This sequence belongs to the acetyltransferase family. GNAT subfamily. Interacts with naa35.

It is found in the cytoplasm. The protein localises to the nucleus. It catalyses the reaction N-terminal L-methionyl-L-alanyl-[protein] + acetyl-CoA = N-terminal N(alpha)-acetyl-L-methionyl-L-alanyl-[protein] + CoA + H(+). It carries out the reaction N-terminal L-methionyl-L-seryl-[protein] + acetyl-CoA = N-terminal N(alpha)-acetyl-L-methionyl-L-seryl-[protein] + CoA + H(+). The enzyme catalyses N-terminal L-methionyl-L-valyl-[protein] + acetyl-CoA = N-terminal N(alpha)-acetyl-L-methionyl-L-valyl-[protein] + CoA + H(+). The catalysed reaction is N-terminal L-methionyl-L-threonyl-[protein] + acetyl-CoA = N-terminal N(alpha)-acetyl-L-methionyl-L-threonyl-[protein] + CoA + H(+). It catalyses the reaction N-terminal L-methionyl-L-lysyl-[protein] + acetyl-CoA = N-terminal N(alpha)-acetyl-L-methionyl-L-lysyl-[protein] + CoA + H(+). It carries out the reaction N-terminal L-methionyl-L-leucyl-[protein] + acetyl-CoA = N-terminal N(alpha)-acetyl-L-methionyl-L-leucyl-[protein] + CoA + H(+). The enzyme catalyses N-terminal L-methionyl-L-phenylalanyl-[protein] + acetyl-CoA = N-terminal N(alpha)-acetyl-L-methionyl-L-phenylalanyl-[protein] + CoA + H(+). The catalysed reaction is N-terminal L-methionyl-L-tyrosyl-[protein] + acetyl-CoA = N-terminal N(alpha)-acetyl-L-methionyl-L-tyrosyl-[protein] + CoA + H(+). In terms of biological role, N-alpha-acetyltransferase that acetylates the N-terminus of proteins that retain their initiating methionine. Has a broad substrate specificity: able to acetylate the initiator methionine of most peptides, except for those with a proline in second position. Also displays N-epsilon-acetyltransferase activity by mediating acetylation of the side chain of specific lysines on proteins. The relevance of N-epsilon-acetyltransferase activity is however unclear. Required for sister chromatid cohesion during mitosis by promoting binding of CDCA5/sororin to cohesin. Essential in embryonic cell proliferation and survival. This chain is N-alpha-acetyltransferase 50 (naa50), found in Danio rerio (Zebrafish).